The chain runs to 196 residues: dITP/XTP pyrophosphatase (196 aa).

Substrate is bound at residue 7–12 (THNPGK). Residues aspartate 40 and aspartate 69 each contribute to the Mg(2+) site. Aspartate 69 serves as the catalytic Proton acceptor. Substrate is bound by residues serine 70, 150-153 (FGYD), lysine 173, and 178-179 (HR).

This sequence belongs to the HAM1 NTPase family. In terms of assembly, homodimer. Requires Mg(2+) as cofactor.

The enzyme catalyses XTP + H2O = XMP + diphosphate + H(+). It carries out the reaction dITP + H2O = dIMP + diphosphate + H(+). The catalysed reaction is ITP + H2O = IMP + diphosphate + H(+). Functionally, pyrophosphatase that catalyzes the hydrolysis of nucleoside triphosphates to their monophosphate derivatives, with a high preference for the non-canonical purine nucleotides XTP (xanthosine triphosphate), dITP (deoxyinosine triphosphate) and ITP. Seems to function as a house-cleaning enzyme that removes non-canonical purine nucleotides from the nucleotide pool, thus preventing their incorporation into DNA/RNA and avoiding chromosomal lesions. The sequence is that of dITP/XTP pyrophosphatase from Exiguobacterium sp. (strain ATCC BAA-1283 / AT1b).